The following is an 818-amino-acid chain: Patatin-like phospholipase domain-containing protein YALI0D16379g (818 aa).

2 disordered regions span residues 1–50 (MLKL…RDVN) and 154–178 (EEKR…KTKE). Residues 22–38 (SQQLTLDSPEGSETSSR) are compositionally biased toward polar residues. The segment covering 164 to 178 (KDKEGSEGDKTKTKE) has biased composition (basic and acidic residues). The chain crosses the membrane as a helical span at residues 223 to 243 (WPALFFIGMWLLFLTTIYASV). The 192-residue stretch at 398 to 589 (LCLSGGGCFA…RTDIPVDALN (192 aa)) folds into the PNPLA domain. The short motif at 429–433 (GTSGG) is the GXSXG element. The Nucleophile role is filled by S431. D576 serves as the catalytic Proton acceptor. A disordered region spans residues 781-805 (AGTDISSSNSDYDHEPQWEMDEGDS).

This sequence belongs to the PLPL family.

It localises to the membrane. In terms of biological role, probable lipid hydrolase. The sequence is that of Patatin-like phospholipase domain-containing protein YALI0D16379g from Yarrowia lipolytica (strain CLIB 122 / E 150) (Yeast).